The sequence spans 484 residues: Folate synthesis bifunctional protein (484 aa).

The HPPK stretch occupies residues 15–141 (VIALGSNVGN…PFVLAPLVDL (127 aa)). Residues 202-470 (TYVMGILNLT…NVRDNVDAAR (269 aa)) enclose the Pterin-binding domain. The tract at residues 204–484 (VMGILNLTPD…MMTKRFKNVD (281 aa)) is DHPS. N209 is a binding site for Mg(2+). (7,8-dihydropterin-6-yl)methyl diphosphate is bound by residues T249, D286, N305, D378, K423, and 458–460 (RVH).

In the N-terminal section; belongs to the HPPK family. The protein in the C-terminal section; belongs to the DHPS family. It depends on Mg(2+) as a cofactor. Expressed exclusively in reproductive tissues.

The protein localises to the cytoplasm. The protein resides in the cytosol. The enzyme catalyses 6-hydroxymethyl-7,8-dihydropterin + ATP = (7,8-dihydropterin-6-yl)methyl diphosphate + AMP + H(+). It catalyses the reaction (7,8-dihydropterin-6-yl)methyl diphosphate + 4-aminobenzoate = 7,8-dihydropteroate + diphosphate. It functions in the pathway cofactor biosynthesis; tetrahydrofolate biosynthesis; 2-amino-4-hydroxy-6-hydroxymethyl-7,8-dihydropteridine diphosphate from 7,8-dihydroneopterin triphosphate: step 4/4. Its pathway is cofactor biosynthesis; tetrahydrofolate biosynthesis; 7,8-dihydrofolate from 2-amino-4-hydroxy-6-hydroxymethyl-7,8-dihydropteridine diphosphate and 4-aminobenzoate: step 1/2. With respect to regulation, inhibited by sulfanilamide. In terms of biological role, catalyzes the first two consecutive steps of tetrahydrofolate biosynthesis. Plays a role in seed stress response and survival. The chain is Folate synthesis bifunctional protein from Arabidopsis thaliana (Mouse-ear cress).